We begin with the raw amino-acid sequence, 112 residues long: Protein FAM32A (112 aa).

The interval 23-58 (TKRKKKKKDKDKAKLLEAMGTSKKNEEEKRRGLDKR) is disordered. Basic and acidic residues predominate over residues 45-58 (KKNEEEKRRGLDKR).

Belongs to the FAM32 family.

It localises to the nucleus. May induce G2 arrest and apoptosis. May also increase cell sensitivity to apoptotic stimuli. The chain is Protein FAM32A (FAM32A) from Bos taurus (Bovine).